The sequence spans 270 residues: Aliphatic sulfonates import ATP-binding protein SsuB (270 aa).

The region spanning 17-238 (LASSGLRKTF…ARGSHRLAAL (222 aa)) is the ABC transporter domain. 49–56 (GRSGCGKS) contacts ATP. Positions 249 to 270 (APGAAPEPDPVAPLPTQLRWAH) are disordered.

Belongs to the ABC transporter superfamily. Aliphatic sulfonates importer (TC 3.A.1.17.2) family. As to quaternary structure, the complex is composed of two ATP-binding proteins (SsuB), two transmembrane proteins (SsuC) and a solute-binding protein (SsuA).

The protein resides in the cell inner membrane. The catalysed reaction is ATP + H2O + aliphatic sulfonate-[sulfonate-binding protein]Side 1 = ADP + phosphate + aliphatic sulfonateSide 2 + [sulfonate-binding protein]Side 1.. In terms of biological role, part of the ABC transporter complex SsuABC involved in aliphatic sulfonates import. Responsible for energy coupling to the transport system. The sequence is that of Aliphatic sulfonates import ATP-binding protein SsuB from Pseudomonas putida (Arthrobacter siderocapsulatus).